The sequence spans 626 residues: MIGQANRIAAAVSTACLAVLLAGCATVPTGGPTFEGRGGGAQGQVDTFTRLLPAGPQPGWGENALVRGFLKDLGSFEENHEAARLYMTEECADVWQPSDRVLVYEEMDAVRFDVETVEEERAARVRVRTPLYATIRPDGQYVPASPGEAIDVVFDLTKVDGEWRIANLPDTILLSRQDVDRVYRPLNLYYFNRDMSTLVPDPVFLPVSSAVNITEQLSQRLVTMLLDGPTDWLAPAVRTSFPAGTTATVEYSSGNVTVNLDHRAAAADPRRLFGMGAQLVWTLKQLPEIQEFTLRLDGEEVELPGVEDGVLQASSQEWNSVNPAGMTGSPRAYFLRDGQLWSLDVDQREALVPGAAGHGRILVEEHAVSLDETRVAGIMPDDDSVRVAPIAEDGEYTTVLQGGDYTSLSWDGYGNLWVVEDLSAEVAEAEREEDLADDTEPGDTAVGSTERRETDRGEKRQVTRLWLLAEDADPVEVHAPELAGVPVTELRVSRDGTRVAVLTGGADGGQVLVGRVVHGESTVSLQAFLPLARDLVTVTDLSWRGADQLAVLGQKERGAIQAYLVSLNGSGESTSAGAVTGSDMKTITAAPGMPLLSGTEEDTISSSSDRLMWRRAVEGTKPVYPG.

The signal sequence occupies residues 1-23 (MIGQANRIAAAVSTACLAVLLAG). The N-palmitoyl cysteine moiety is linked to residue Cys-24. The S-diacylglycerol cysteine moiety is linked to residue Cys-24. A disordered region spans residues 428–457 (EAEREEDLADDTEPGDTAVGSTERRETDRG). Residues 430–441 (EREEDLADDTEP) show a composition bias toward acidic residues.

Belongs to the LpqB lipoprotein family.

Its subcellular location is the cell membrane. The sequence is that of Lipoprotein LpqB from Thermobifida fusca (strain YX).